We begin with the raw amino-acid sequence, 163 residues long: Acetolactate synthase small subunit (163 aa).

Positions Ile4 to Gln79 constitute an ACT domain.

It belongs to the acetolactate synthase small subunit family. Dimer of large and small chains.

The enzyme catalyses 2 pyruvate + H(+) = (2S)-2-acetolactate + CO2. It functions in the pathway amino-acid biosynthesis; L-isoleucine biosynthesis; L-isoleucine from 2-oxobutanoate: step 1/4. The protein operates within amino-acid biosynthesis; L-valine biosynthesis; L-valine from pyruvate: step 1/4. This Haemophilus influenzae (strain ATCC 51907 / DSM 11121 / KW20 / Rd) protein is Acetolactate synthase small subunit (ilvH).